A 298-amino-acid chain; its full sequence is Small ribosomal subunit protein uS2 (298 aa).

Composition is skewed to basic and acidic residues over residues 237 to 259 (QSKE…DGQK) and 280 to 298 (PKSE…ENKG). The disordered stretch occupies residues 237–298 (QSKELDDKAD…DAAKLPENKG (62 aa)).

This sequence belongs to the universal ribosomal protein uS2 family.

The protein is Small ribosomal subunit protein uS2 of Neorickettsia sennetsu (strain ATCC VR-367 / Miyayama) (Ehrlichia sennetsu).